The primary structure comprises 173 residues: Crossover junction endodeoxyribonuclease RuvC (173 aa).

Active-site residues include aspartate 8, glutamate 67, and aspartate 139. The Mg(2+) site is built by aspartate 8, glutamate 67, and aspartate 139.

The protein belongs to the RuvC family. In terms of assembly, homodimer which binds Holliday junction (HJ) DNA. The HJ becomes 2-fold symmetrical on binding to RuvC with unstacked arms; it has a different conformation from HJ DNA in complex with RuvA. In the full resolvosome a probable DNA-RuvA(4)-RuvB(12)-RuvC(2) complex forms which resolves the HJ. It depends on Mg(2+) as a cofactor.

The protein resides in the cytoplasm. It catalyses the reaction Endonucleolytic cleavage at a junction such as a reciprocal single-stranded crossover between two homologous DNA duplexes (Holliday junction).. Functionally, the RuvA-RuvB-RuvC complex processes Holliday junction (HJ) DNA during genetic recombination and DNA repair. Endonuclease that resolves HJ intermediates. Cleaves cruciform DNA by making single-stranded nicks across the HJ at symmetrical positions within the homologous arms, yielding a 5'-phosphate and a 3'-hydroxyl group; requires a central core of homology in the junction. The consensus cleavage sequence is 5'-(A/T)TT(C/G)-3'. Cleavage occurs on the 3'-side of the TT dinucleotide at the point of strand exchange. HJ branch migration catalyzed by RuvA-RuvB allows RuvC to scan DNA until it finds its consensus sequence, where it cleaves and resolves the cruciform DNA. This Klebsiella pneumoniae (strain 342) protein is Crossover junction endodeoxyribonuclease RuvC.